The following is a 253-amino-acid chain: MAATQLTASPVTMSARSLASLDGLRASSVKFSSLKPGTLRQSQFRRLVVKAASVVAPKYTSIKPLGDRVLVKIKEAEEKTLGGILLPSTAQSKPQGGEVVAVGEGRTIGKNKIDITVPTGAQIIYSKYAGTEVEFNDVKHLILKEDDIVGILETEDIKDLKPLNDRVFIKVAEAEEKTAGGLLLTETTKEKPSIGTVIAVGPGSLDEEGKITPLPVSTGSTVLYSKYAGNDFKGKDGSNYIALRASDVMAILS.

Residues 1–50 (MAATQLTASPVTMSARSLASLDGLRASSVKFSSLKPGTLRQSQFRRLVVK) constitute a chloroplast transit peptide. Cpn-10 domain regions lie at residues 60–153 (TSIK…GILE) and 159–252 (DLKP…MAIL). At T212 the chain carries Phosphothreonine.

The protein belongs to the GroES chaperonin family. In terms of assembly, homotetramer. Forms stable complexes with CPN60 in the presence of ATP. Interacts with FSD1. Interacts with CLPT1 and CLPT2. Interacts with CHLH. Interacts with SPY. As to expression, ubiquitous. Most abundant in leaves and inflorescence. Low levels found in roots.

It localises to the plastid. The protein localises to the chloroplast. Seems to function only as a co-chaperone, along with CPN60, and in certain cases is essential for the discharge of biologically active proteins from CPN60. Required to activate the iron superoxide dismutases (FeSOD). In terms of biological role, involved in abscisic acid (ABA) signaling, independently of its co-chaperone role. Acts as a negative regulator of the CHLH-WRKY40 coupled ABA signaling pathway, downstream of CHLH and upstream of WRKY40. This chain is 20 kDa chaperonin, chloroplastic (CPN20), found in Arabidopsis thaliana (Mouse-ear cress).